The sequence spans 185 residues: Ribosome-recycling factor (185 aa).

The segment at 137-158 (DELKKLEKDHTASEDEVKRAQD) is disordered.

It belongs to the RRF family.

It is found in the cytoplasm. Its function is as follows. Responsible for the release of ribosomes from messenger RNA at the termination of protein biosynthesis. May increase the efficiency of translation by recycling ribosomes from one round of translation to another. The protein is Ribosome-recycling factor of Desulfitobacterium hafniense (strain Y51).